Reading from the N-terminus, the 620-residue chain is Bicaudal D-related protein homolog (620 aa).

Over residues 23–41 (NNNNNSIVGGSSSSSSGGN) the composition is skewed to low complexity. The tract at residues 23–53 (NNNNNSIVGGSSSSSSGGNKSKRPRQFGQYS) is disordered. Coiled coils occupy residues 120 to 331 (AAEL…LSER) and 461 to 575 (VLEQ…LIDE). 2 stretches are compositionally biased toward basic and acidic residues: residues 493–503 (KEERDQARGDL) and 509–528 (RDEL…DRRT). The interval 493–528 (KEERDQARGDLEDNTDRDELLSKAQTERDAANDRRT) is disordered.

It belongs to the BICDR family. As to quaternary structure, may homodimerize but does not interact with BicD. May interact with eEF1gamma; The interaction is probably indirect.

In terms of biological role, functions redundantly with BicD. Involved in formation and/or development of mechanosensory organs during metamorphosis. During macrochaetae development, together with BicD, involved in Rab 6 and Spn-F stability and distribution and actin cytoskeleton organization. The polypeptide is Bicaudal D-related protein homolog (Drosophila melanogaster (Fruit fly)).